Here is a 229-residue protein sequence, read N- to C-terminus: Platelet-activating factor acetylhydrolase IB subunit alpha2 (229 aa).

Catalysis depends on residues serine 48, aspartate 193, and histidine 196.

The protein belongs to the 'GDSL' lipolytic enzyme family. Platelet-activating factor acetylhydrolase IB beta/gamma subunits subfamily. Forms a catalytic dimer which is either homodimer (alpha2/alpha2 homodimer) or heterodimer with PAFAH1B3 (alpha2/alpha1 heterodimer). Component of the cytosolic (PAF-AH (I)) heterotetrameric enzyme, which is composed of PAFAH1B1 (beta), PAFAH1B2 (alpha2) and PAFAH1B3 (alpha1) subunits. The catalytic activity of the enzyme resides in the alpha1 (PAFAH1B3) and alpha2 (PAFAH1B2) subunits, whereas the beta subunit (PAFAH1B1) has regulatory activity. Trimer formation is not essential for the catalytic activity.

It is found in the cytoplasm. The enzyme catalyses a 1-O-alkyl-2-acetyl-sn-glycero-3-phosphocholine + H2O = a 1-O-alkyl-sn-glycero-3-phosphocholine + acetate + H(+). It catalyses the reaction 1-O-hexadecyl-2-acetyl-sn-glycero-3-phosphocholine + H2O = 1-O-hexadecyl-sn-glycero-3-phosphocholine + acetate + H(+). The catalysed reaction is 1-O-hexadecyl-2-acetyl-sn-glycero-3-phosphate + H2O = 1-O-hexadecyl-sn-glycero-3-phosphate + acetate + H(+). It carries out the reaction 1-O-hexadecyl-2-acetyl-sn-glycero-3-phosphoethanolamine + H2O = 1-O-hexadecyl-sn-glycero-3-phosphoethanolamine + acetate + H(+). Its function is as follows. Alpha2 catalytic subunit of the cytosolic type I platelet-activating factor (PAF) acetylhydrolase (PAF-AH (I)) heterotetrameric enzyme that catalyzes the hydrolyze of the acetyl group at the sn-2 position of PAF and its analogs and modulates the action of PAF. The protein is Platelet-activating factor acetylhydrolase IB subunit alpha2 (PAFAH1B2) of Gallus gallus (Chicken).